Reading from the N-terminus, the 733-residue chain is Oligopeptide transporter 8 (733 aa).

14 consecutive transmembrane segments (helical) span residues 42-62 (MWVL…FFWY), 66-86 (PLTI…HLMA), 115-135 (VLIT…HILS), 147-167 (FLPA…WAGL), 209-229 (FFVI…YLFT), 244-264 (SILV…SFGL), 281-301 (FFAS…ITPL), 357-377 (FAVT…HVLI), 413-433 (LWWF…ICIY), 442-462 (WWGA…VGVI), 531-551 (VGTL…MAEI), 596-616 (YSNI…VYLA), 644-664 (ASAV…HFVF), and 677-697 (VLSG…FLAL).

This sequence belongs to the oligopeptide OPT transporter (TC 2.A.67.1) family.

Its subcellular location is the membrane. May be involved in the translocation of tetra- and pentapeptides across the cellular membrane in an energy-dependent manner. The chain is Oligopeptide transporter 8 (OPT8) from Arabidopsis thaliana (Mouse-ear cress).